A 392-amino-acid chain; its full sequence is 5-amino-6-(D-ribitylamino)uracil--L-tyrosine 4-hydroxyphenyl transferase (392 aa).

One can recognise a Radical SAM core domain in the interval 60 to 307; it reads VTYVVNRNIN…MAIARLYLGK (248 aa). The [4Fe-4S] cluster site is built by cysteine 74, cysteine 78, and cysteine 81.

It belongs to the radical SAM superfamily. CofH family. Consists of two subunits, CofG and CofH. Requires [4Fe-4S] cluster as cofactor.

The enzyme catalyses 5-amino-6-(D-ribitylamino)uracil + L-tyrosine + S-adenosyl-L-methionine = 5-amino-5-(4-hydroxybenzyl)-6-(D-ribitylimino)-5,6-dihydrouracil + 2-iminoacetate + 5'-deoxyadenosine + L-methionine + H(+). It participates in cofactor biosynthesis; coenzyme F0 biosynthesis. In terms of biological role, catalyzes the radical-mediated synthesis of 5-amino-5-(4-hydroxybenzyl)-6-(D-ribitylimino)-5,6-dihydrouracil from 5-amino-6-(D-ribitylamino)uracil and L-tyrosine. The polypeptide is 5-amino-6-(D-ribitylamino)uracil--L-tyrosine 4-hydroxyphenyl transferase (Synechocystis sp. (strain ATCC 27184 / PCC 6803 / Kazusa)).